The chain runs to 283 residues: Non-selective voltage-gated ion channel VDAC1 (283 aa).

Position 2 is an N-acetylalanine (A2). K12 lines the ATP pocket. K12 is covalently cross-linked (Glycyl lysine isopeptide (Lys-Gly) (interchain with G-Cter in ubiquitin)). S13 carries the phosphoserine modification. Residue T19 is modified to Phosphothreonine. Residue K20 coordinates ATP. The residue at position 20 (K20) is an N6-acetyllysine; alternate. K20 is subject to N6-succinyllysine; alternate. Residue K20 forms a Glycyl lysine isopeptide (Lys-Gly) (interchain with G-Cter in ubiquitin); alternate linkage. 2 consecutive transmembrane segments (beta stranded) span residues 26–35 and 39–47; these read LIKLDLKTKS and LEFTSSGSA. Glycyl lysine isopeptide (Lys-Gly) (interchain with G-Cter in ubiquitin) cross-links involve residues K53 and K61. A beta stranded membrane pass occupies residues 54–64; the sequence is VTGSLETKYRW. Y67 carries the post-translational modification Phosphotyrosine. Beta stranded transmembrane passes span 69–76, 80–89, and 95–104; these read LTFTEKWN, TLGTEITVED, and LKLTFDSSFS. The residue at position 107 (T107) is a Phosphothreonine. N6-acetyllysine; alternate is present on K109. Residue K109 forms a Glycyl lysine isopeptide (Lys-Gly) (interchain with G-Cter in ubiquitin); alternate linkage. A Glycyl lysine isopeptide (Lys-Gly) (interchain with G-Cter in ubiquitin) cross-link involves residue K110. Beta stranded transmembrane passes span 111 to 120, 123 to 130, 137 to 145, and 150 to 158; these read NAKIKTGYKR, INLGCDVD, SIRGALVLG, and LAGYQMNFE. A Glycyl lysine isopeptide (Lys-Gly) (interchain with G-Cter in ubiquitin) cross-link involves residue K161. The next 6 beta stranded transmembrane spans lie at 163–175, 178–185, 189–198, 202–211, 218–227, and 231–238; these read RVTQ…GYKT, FQLHTNVN, EFGGSIYQKV, LETAVNLAWT, RFGIAAKYQI, and ACFSAKVN. The residue at position 193 (S193) is a Phosphoserine; by NEK1. S240 carries the phosphoserine modification. NAD(+) is bound at residue 242–244; that stretch reads LIG. Residues 242 to 251 traverse the membrane as a beta stranded segment; sequence LIGLGYTQTL. K252 carries the post-translational modification N6-acetyllysine. Residues 254–263 form a beta stranded membrane-spanning segment; sequence GIKLTLSALL. 260-264 provides a ligand contact to NAD(+); sequence SALLD. K266 is modified (N6-acetyllysine; alternate). K266 is covalently cross-linked (Glycyl lysine isopeptide (Lys-Gly) (interchain with G-Cter in ubiquitin); alternate). Residues 273 to 282 form a beta stranded membrane-spanning segment; it reads HKLGLGLEFQ. K274 participates in a covalent cross-link: Glycyl lysine isopeptide (Lys-Gly) (interchain with G-Cter in ubiquitin).

Belongs to the eukaryotic mitochondrial porin family. Homodimer and homotrimer; in response to cyclic AMP or calcium; oligomerization is required for scramblase activity. Component of the mitochondrial permeability transition pore complex (mPTPC), at least composed of SPG7, VDAC1 and PPIF. Interacts with SPG7, NIPSNAP2 and SLC25A30. Interacts with hexokinases including HK1. The HK1-VDAC1 complex interacts with ATF2. Interacts with BCL2L1. Interacts with BAK1. Interacts with RTL10/BOP (via BH3 domain). Interacts with amyloid-beta and APP; induces VDAC1 dephosphorylation. Interacts with TMEM41B. Interacts with BCAP31. Interacts with HSPA9; this interaction couples ITPR1 to VDAC1. Phosphorylation at Ser-193 by NEK1 promotes the closed conformational state preventing excessive mitochondrial membrane permeability and subsequent apoptotic cell death after injury. Phosphorylation by the AKT-GSK3B axis stabilizes the protein probably by preventing ubiquitin-mediated proteasomal degradation. In terms of processing, ubiquitinated. Undergoes monoubiquitination and polyubiquitination by PRKN; monoubiquitination at Lys-274 inhibits apoptosis, whereas polyubiquitination leads to its degradation and promotes mitophagy. Deubiquitinated by USP30. Predominantly in brain astrocytes.

Its subcellular location is the mitochondrion outer membrane. The protein resides in the cell membrane. It is found in the membrane raft. The catalysed reaction is chloride(in) = chloride(out). It carries out the reaction K(+)(in) = K(+)(out). The enzyme catalyses ATP(in) = ATP(out). It catalyses the reaction Ca(2+)(in) = Ca(2+)(out). The catalysed reaction is Na(+)(in) = Na(+)(out). It carries out the reaction Mg(2+)(in) = Mg(2+)(out). The enzyme catalyses L-glutamate(out) = L-glutamate(in). It catalyses the reaction dopamine(out) = dopamine(in). The catalysed reaction is acetylcholine(in) = acetylcholine(out). It carries out the reaction Fe(III)-[cytochrome c](out) = Fe(III)-[cytochrome c](in). The enzyme catalyses a 1,2-diacyl-sn-glycero-3-phosphocholine(in) = a 1,2-diacyl-sn-glycero-3-phosphocholine(out). It catalyses the reaction a 1,2-diacyl-sn-glycero-3-phospho-L-serine(in) = a 1,2-diacyl-sn-glycero-3-phospho-L-serine(out). Its activity is regulated as follows. Inhibited by nitric oxide. Functionally, non-selective voltage-gated ion channel that mediates the transport of anions and cations through the mitochondrion outer membrane and plasma membrane. The channel at the outer mitochondrial membrane allows diffusion of small hydrophilic molecules; in the plasma membrane it is involved in cell volume regulation and apoptosis. It adopts an open conformation at low or zero membrane potential and a closed conformation at potentials above 30-40 mV. The open state has a weak anion selectivity whereas the closed state is cation-selective. Binds various signaling molecules, including the sphingolipid ceramide, the phospholipid phosphatidylcholine, and the sterols cholesterol and oxysterol. In depolarized mitochondria, acts downstream of PRKN and PINK1 to promote mitophagy or prevent apoptosis; polyubiquitination by PRKN promotes mitophagy, while monoubiquitination by PRKN decreases mitochondrial calcium influx which ultimately inhibits apoptosis. May participate in the formation of the permeability transition pore complex (PTPC) responsible for the release of mitochondrial products that triggers apoptosis. May mediate ATP export from cells. Part of a complex composed of HSPA9, ITPR1 and VDAC1 that regulates mitochondrial calcium-dependent apoptosis by facilitating calcium transport from the ER lumen to the mitochondria intermembrane space thus providing calcium for the downstream calcium channel MCU that directly releases it into mitochondria matrix. Mediates cytochrome c efflux. Catalyzes the scrambling of phospholipids across the outer mitochondrial membrane; the mechanism is unrelated to channel activity and is capable of translocating both anionic and zwitterionic phospholipids. In Bos taurus (Bovine), this protein is Non-selective voltage-gated ion channel VDAC1.